The primary structure comprises 788 residues: Cap-specific mRNA (nucleoside-2'-O-)-methyltransferase 1 (788 aa).

Residues 25–71 form the G-patch domain; the sequence is YSNKAMEMMKKMGYENDKGLGKSNQGRLEPIIAVQQDGRRGFGLKLD. Substrate contacts are provided by residues 143-147 and Arg158; that span reads KTVFD. The 214-residue stretch at 171 to 384 folds into the RrmJ-type SAM-dependent 2'-O-MTase domain; that stretch reads IFLNRAAVKM…ERYLVCKYKR (214 aa). Residue Asn174 participates in S-adenosyl-L-methionine binding. Lys179 is a catalytic residue. 215–221 is an S-adenosyl-L-methionine binding site; the sequence is CAGPGGF. Asp298 is an active-site residue. 308–310 provides a ligand contact to substrate; that stretch reads NIQ. Lys338 functions as the Proton acceptor in the catalytic mechanism. Asn373 is a substrate binding site.

Interacts (via C-terminus) with r2d2 (via C-terminus).

The protein localises to the nucleus. The protein resides in the cytoplasm. The catalysed reaction is a 5'-end (N(7)-methyl 5'-triphosphoguanosine)-ribonucleoside in mRNA + S-adenosyl-L-methionine = a 5'-end (N(7)-methyl 5'-triphosphoguanosine)-(2'-O-methyl-ribonucleoside) in mRNA + S-adenosyl-L-homocysteine + H(+). Functionally, S-adenosyl-L-methionine-dependent methyltransferase that mediates mRNA cap1 2'-O-ribose methylation to the 5'-cap structure of mRNAs. Methylates the ribose of the first nucleotide of a m(7)GpppG-capped mRNA to produce m(7)GpppNmp (cap1). Positively regulates the Ago2-dependent small RNA pathway, with roles in both siRNA biogenesis and RISC assembly. Involved in facilitating conversion of pre-RISC into holo-RISC, possibly by promoting the unwinding of Ago2-bound siRNA duplexes and thus the retention of the guide strand in holo-RISC. The chain is Cap-specific mRNA (nucleoside-2'-O-)-methyltransferase 1 from Drosophila melanogaster (Fruit fly).